An 896-amino-acid chain; its full sequence is Translation initiation factor IF-2 (896 aa).

Residues 93-219 show a composition bias toward basic and acidic residues; that stretch reads VKRDPQEAER…RMAEENEKNW (127 aa). Residues 93–307 form a disordered region; sequence VKRDPQEAER…GSALQQGFQK (215 aa). Positions 256 to 271 are enriched in basic residues; sequence GRSRSSKAARPAKKGN. Over residues 272 to 285 the composition is skewed to basic and acidic residues; that stretch reads KHAESKADREEARA. Residues 395 to 564 form the tr-type G domain; sequence PRAPVVTIMG…LLQAEVLELK (170 aa). Positions 404 to 411 are G1; it reads GHVDHGKT. 404-411 serves as a coordination point for GTP; that stretch reads GHVDHGKT. A G2 region spans residues 429 to 433; sequence GITQH. The interval 450–453 is G3; it reads DTPG. GTP-binding positions include 450–454 and 504–507; these read DTPGH and NKID. The G4 stretch occupies residues 504-507; it reads NKID. Residues 540-542 form a G5 region; the sequence is SAK.

Belongs to the TRAFAC class translation factor GTPase superfamily. Classic translation factor GTPase family. IF-2 subfamily.

It is found in the cytoplasm. One of the essential components for the initiation of protein synthesis. Protects formylmethionyl-tRNA from spontaneous hydrolysis and promotes its binding to the 30S ribosomal subunits. Also involved in the hydrolysis of GTP during the formation of the 70S ribosomal complex. In Klebsiella pneumoniae (strain 342), this protein is Translation initiation factor IF-2.